Here is a 281-residue protein sequence, read N- to C-terminus: Acetyl-coenzyme A carboxylase carboxyl transferase subunit beta 2 (281 aa).

The region spanning 26 to 281 (LLTRCPVCHE…TITQGGHQDV (256 aa)) is the CoA carboxyltransferase N-terminal domain. Residues C30, C33, C48, and C51 each coordinate Zn(2+). Residues 30–51 (CPVCHEDCYTQDLGEFKVCPHC) form a C4-type zinc finger.

The protein belongs to the AccD/PCCB family. As to quaternary structure, acetyl-CoA carboxylase is a heterohexamer composed of biotin carboxyl carrier protein (AccB), biotin carboxylase (AccC) and two subunits each of ACCase subunit alpha (AccA) and ACCase subunit beta (AccD). Zn(2+) is required as a cofactor.

It is found in the cytoplasm. It catalyses the reaction N(6)-carboxybiotinyl-L-lysyl-[protein] + acetyl-CoA = N(6)-biotinyl-L-lysyl-[protein] + malonyl-CoA. It functions in the pathway lipid metabolism; malonyl-CoA biosynthesis; malonyl-CoA from acetyl-CoA: step 1/1. In terms of biological role, component of the acetyl coenzyme A carboxylase (ACC) complex. Biotin carboxylase (BC) catalyzes the carboxylation of biotin on its carrier protein (BCCP) and then the CO(2) group is transferred by the transcarboxylase to acetyl-CoA to form malonyl-CoA. The chain is Acetyl-coenzyme A carboxylase carboxyl transferase subunit beta 2 from Lactiplantibacillus plantarum (strain JDM1) (Lactobacillus plantarum).